The primary structure comprises 204 residues: Somatotropin (204 aa).

Residues M1–S17 form the signal peptide. Q18 is subject to Pyrrolidone carboxylic acid. H36 contributes to the Zn(2+) binding site. A disulfide bridge connects residues C69 and C177. E186 is a binding site for Zn(2+). C194 and C202 form a disulfide bridge.

This sequence belongs to the somatotropin/prolactin family.

The protein resides in the secreted. Functionally, growth hormone plays an important role in growth control and is involved in the regulation of several anabolic processes. Implicated as an osmoregulatory substance important for seawater adaptation. This is Somatotropin (gh) from Sebastes schlegelii (Korean rockfish).